The primary structure comprises 165 residues: Phosphopantetheine adenylyltransferase (165 aa).

Residue T10 participates in substrate binding. ATP contacts are provided by residues 10 to 11 (TF) and H18. Substrate contacts are provided by K42, L75, and R89. Residues 90 to 92 (GVR), E100, and 125 to 131 (VSFISSS) each bind ATP.

The protein belongs to the bacterial CoaD family. As to quaternary structure, homohexamer. Mg(2+) serves as cofactor.

The protein localises to the cytoplasm. It carries out the reaction (R)-4'-phosphopantetheine + ATP + H(+) = 3'-dephospho-CoA + diphosphate. It functions in the pathway cofactor biosynthesis; coenzyme A biosynthesis; CoA from (R)-pantothenate: step 4/5. Reversibly transfers an adenylyl group from ATP to 4'-phosphopantetheine, yielding dephospho-CoA (dPCoA) and pyrophosphate. This chain is Phosphopantetheine adenylyltransferase, found in Buchnera aphidicola subsp. Schizaphis graminum (strain Sg).